A 136-amino-acid chain; its full sequence is ATP synthase epsilon chain (136 aa).

Residues Q100–N120 form a disordered region. The span at E105–N114 shows a compositional bias: basic and acidic residues.

It belongs to the ATPase epsilon chain family. F-type ATPases have 2 components, CF(1) - the catalytic core - and CF(0) - the membrane proton channel. CF(1) has five subunits: alpha(3), beta(3), gamma(1), delta(1), epsilon(1). CF(0) has three main subunits: a, b and c.

The protein resides in the cellular thylakoid membrane. Produces ATP from ADP in the presence of a proton gradient across the membrane. This is ATP synthase epsilon chain (atpC) from Synechocystis sp. (strain ATCC 27184 / PCC 6803 / Kazusa).